Consider the following 699-residue polypeptide: DNA ligase (699 aa).

The interval 1-29 is disordered; it reads MSDADVDAESNPYLRDPPTEFEPAESLSR. NAD(+) contacts are provided by residues 60 to 64, 108 to 109, and E137; these read DAAYD and SI. The N6-AMP-lysine intermediate role is filled by K139. NAD(+) contacts are provided by R160, E196, K311, and K335. Zn(2+)-binding residues include C425, C428, C441, and C447. Positions 613–666 constitute a BRCT domain; the sequence is SGGDELDGLTFVVTGTLAASRSDVTELVESHGGNVTGSVSGNTDYLVVGENPGR.

The protein belongs to the NAD-dependent DNA ligase family. LigA subfamily. Requires Mg(2+) as cofactor. Mn(2+) serves as cofactor.

It carries out the reaction NAD(+) + (deoxyribonucleotide)n-3'-hydroxyl + 5'-phospho-(deoxyribonucleotide)m = (deoxyribonucleotide)n+m + AMP + beta-nicotinamide D-nucleotide.. Displays maximal in vitro activity at high salt levels. In terms of biological role, DNA ligase that catalyzes the formation of phosphodiester linkages between 5'-phosphoryl and 3'-hydroxyl groups in double-stranded DNA using NAD as a coenzyme and as the energy source for the reaction. It is essential for DNA replication and repair of damaged DNA. This chain is DNA ligase, found in Haloferax volcanii (strain ATCC 29605 / DSM 3757 / JCM 8879 / NBRC 14742 / NCIMB 2012 / VKM B-1768 / DS2) (Halobacterium volcanii).